We begin with the raw amino-acid sequence, 348 residues long: Fructose-1,6-bisphosphatase class 1 (348 aa).

Mg(2+) contacts are provided by Glu92, Asp111, Leu113, and Asp114. Residues 114–117 (DGSS) and Asn204 each bind substrate. Position 276 (Glu276) interacts with Mg(2+).

The protein belongs to the FBPase class 1 family. In terms of assembly, homotetramer. It depends on Mg(2+) as a cofactor.

The protein resides in the cytoplasm. It carries out the reaction beta-D-fructose 1,6-bisphosphate + H2O = beta-D-fructose 6-phosphate + phosphate. Its pathway is carbohydrate biosynthesis; gluconeogenesis. The sequence is that of Fructose-1,6-bisphosphatase class 1 from Methylorubrum populi (strain ATCC BAA-705 / NCIMB 13946 / BJ001) (Methylobacterium populi).